Here is a 487-residue protein sequence, read N- to C-terminus: DEAD-box ATP-dependent RNA helicase CshA (487 aa).

The short motif at 3-31 (ITFQDFQLSSDLTKAIKRMGFEEATPIQA) is the Q motif element. Residues 34–204 (IPLGLANKDV…ERFMTNPEHV (171 aa)) form the Helicase ATP-binding domain. 47 to 54 (AQTGTGKT) lines the ATP pocket. The DEAD box signature appears at 152 to 155 (DEAD). Residues 215–375 (NIQQFYLEVH…RMKAPTLDEA (161 aa)) form the Helicase C-terminal domain. The segment covering 428–440 (DNTPVRLTEEAPL) has biased composition (basic and acidic residues). The tract at residues 428–487 (DNTPVRLTEEAPLRTKRNKNHHHRSSKRRDGGGYRGKNNRSSYDKKRSSNDRRQKKSYNS) is disordered. Residues 441 to 454 (RTKRNKNHHHRSSK) are compositionally biased toward basic residues. Positions 469 to 479 (SYDKKRSSNDR) are enriched in basic and acidic residues.

This sequence belongs to the DEAD box helicase family. CshA subfamily. As to quaternary structure, oligomerizes, may be a member of the RNA degradosome.

It localises to the cytoplasm. It catalyses the reaction ATP + H2O = ADP + phosphate + H(+). Its function is as follows. DEAD-box RNA helicase possibly involved in RNA degradation. Unwinds dsRNA in both 5'- and 3'-directions, has RNA-dependent ATPase activity. The sequence is that of DEAD-box ATP-dependent RNA helicase CshA from Bacillus licheniformis (strain ATCC 14580 / DSM 13 / JCM 2505 / CCUG 7422 / NBRC 12200 / NCIMB 9375 / NCTC 10341 / NRRL NRS-1264 / Gibson 46).